A 169-amino-acid chain; its full sequence is Disulfide bond formation protein B 1 (169 aa).

Residues 1–14 are Cytoplasmic-facing; it reads MSDDRLGLGRERRF. A helical membrane pass occupies residues 15 to 31; sequence LVLLGIICLALIGGALY. The Periplasmic segment spans residues 32–49; the sequence is MQVVLGEAPCPLCILQRY. Cysteine 41 and cysteine 44 form a disulfide bridge. The helical transmembrane segment at 50–64 threads the bilayer; that stretch reads ALLLIALFAFIGAAM. The Cytoplasmic portion of the chain corresponds to 65–71; the sequence is SSRRGVT. A helical transmembrane segment spans residues 72–89; sequence VMETLVVICALAGAGVAG. At 90-144 the chain is on the periplasmic side; that stretch reads HHVYTQFYPSVSCGIDVLQPIVDSLPLAKIFPLGFQVDGFCSTPYPPILGLSLAQ. A disulfide bond links cysteine 102 and cysteine 130. The helical transmembrane segment at 145 to 163 threads the bilayer; it reads WALVAFVLTVILVPLGVVR. Topologically, residues 164 to 169 are cytoplasmic; that stretch reads NRKKTY.

The protein belongs to the DsbB family.

Its subcellular location is the cell inner membrane. Functionally, required for disulfide bond formation in some periplasmic proteins. Acts by oxidizing the DsbA protein. The chain is Disulfide bond formation protein B 1 from Pseudomonas fluorescens (strain ATCC BAA-477 / NRRL B-23932 / Pf-5).